The chain runs to 513 residues: Histidine ammonia-lyase (513 aa).

A cross-link (5-imidazolinone (Ala-Gly)) is located at residues 143 to 145; it reads ASG. Ser144 carries the 2,3-didehydroalanine (Ser) modification.

This sequence belongs to the PAL/histidase family. Contains an active site 4-methylidene-imidazol-5-one (MIO), which is formed autocatalytically by cyclization and dehydration of residues Ala-Ser-Gly.

The protein localises to the cytoplasm. The catalysed reaction is L-histidine = trans-urocanate + NH4(+). It participates in amino-acid degradation; L-histidine degradation into L-glutamate; N-formimidoyl-L-glutamate from L-histidine: step 1/3. The sequence is that of Histidine ammonia-lyase from Paracoccus denitrificans (strain Pd 1222).